The primary structure comprises 370 residues: Probable neutral protease 2 homolog TRV_02539 (370 aa).

An N-terminal signal peptide occupies residues 1–19 (MQLVAALAALGALVAPAVA). The propeptide occupies 20-188 (YPHAPMNETL…SIHSRALQKR (169 aa)). Cystine bridges form between Cys196-Cys267 and Cys274-Cys292. Zn(2+) is bound at residue His316. Glu317 is a catalytic residue. 2 residues coordinate Zn(2+): His320 and Asp331.

Belongs to the peptidase M35 family. Requires Zn(2+) as cofactor.

It localises to the secreted. The catalysed reaction is Preferential cleavage of bonds with hydrophobic residues in P1'. Also 3-Asn-|-Gln-4 and 8-Gly-|-Ser-9 bonds in insulin B chain.. Probable secreted metalloprotease that shows high activities on basic nuclear substrates such as histone and protamine. May be involved in virulence. This chain is Probable neutral protease 2 homolog TRV_02539, found in Trichophyton verrucosum (strain HKI 0517).